A 99-amino-acid chain; its full sequence is Keratinocyte differentiation-associated protein (99 aa).

Positions 1-22 (MKIPVLPAVVLLSLLALHSAQG) are cleaved as a signal peptide.

Highly expressed in skin, but not detectable in any other tissue examined. Expression restricted to cornified/stratified epithelia and not detected in non-cornified/stratified epithelia.

It is found in the secreted. May act as a soluble regulator of keratinocyte differentiation. May play an important role in embryonic skin morphogenesis. The protein is Keratinocyte differentiation-associated protein of Canis lupus familiaris (Dog).